The primary structure comprises 110 residues: Body wall hemoglobin (110 aa).

The 109-residue stretch at Val2–Phe110 folds into the Globin domain. Position 70 (His70) interacts with heme.

Belongs to the globin family. Homotetramer.

The protein is Body wall hemoglobin of Cerebratulus lacteus (Milky ribbon worm).